We begin with the raw amino-acid sequence, 333 residues long: Glyceraldehyde-3-phosphate dehydrogenase (333 aa).

NAD(+) contacts are provided by residues 11–12 (RI), aspartate 35, and threonine 121. Residues 151-153 (SCT) and threonine 182 each bind D-glyceraldehyde 3-phosphate. The active-site Nucleophile is the cysteine 152. Residue asparagine 183 participates in NAD(+) binding. Residues arginine 197, 210 to 211 (TG), and arginine 233 contribute to the D-glyceraldehyde 3-phosphate site. NAD(+) is bound at residue asparagine 315.

It belongs to the glyceraldehyde-3-phosphate dehydrogenase family. As to quaternary structure, homotetramer.

Its subcellular location is the cytoplasm. It carries out the reaction D-glyceraldehyde 3-phosphate + phosphate + NAD(+) = (2R)-3-phospho-glyceroyl phosphate + NADH + H(+). The protein operates within carbohydrate degradation; glycolysis; pyruvate from D-glyceraldehyde 3-phosphate: step 1/5. Its function is as follows. Catalyzes the oxidative phosphorylation of glyceraldehyde 3-phosphate (G3P) to 1,3-bisphosphoglycerate (BPG) using the cofactor NAD. The first reaction step involves the formation of a hemiacetal intermediate between G3P and a cysteine residue, and this hemiacetal intermediate is then oxidized to a thioester, with concomitant reduction of NAD to NADH. The reduced NADH is then exchanged with the second NAD, and the thioester is attacked by a nucleophilic inorganic phosphate to produce BPG. This chain is Glyceraldehyde-3-phosphate dehydrogenase (gap), found in Thermotoga maritima (strain ATCC 43589 / DSM 3109 / JCM 10099 / NBRC 100826 / MSB8).